We begin with the raw amino-acid sequence, 151 residues long: uncharacterized protein (151 aa).

This is an uncharacterized protein from Aquifex aeolicus (strain VF5).